We begin with the raw amino-acid sequence, 86 residues long: Small ribosomal subunit protein bS18 (86 aa).

Residues 1-20 are disordered; it reads MSREEGNNGRRPGGKMRRSR.

This sequence belongs to the bacterial ribosomal protein bS18 family. In terms of assembly, part of the 30S ribosomal subunit. Forms a tight heterodimer with protein bS6.

Functionally, binds as a heterodimer with protein bS6 to the central domain of the 16S rRNA, where it helps stabilize the platform of the 30S subunit. In Clostridium beijerinckii (strain ATCC 51743 / NCIMB 8052) (Clostridium acetobutylicum), this protein is Small ribosomal subunit protein bS18.